We begin with the raw amino-acid sequence, 416 residues long: Enterobactin exporter EntS (416 aa).

Residues Met1 to Ala21 lie on the Cytoplasmic side of the membrane. A helical membrane pass occupies residues Val22–Val42. Over Gln43 to Gly55 the chain is Periplasmic. Residues Leu56–Ala76 form a helical membrane-spanning segment. Residues Asp77–Lys83 are Cytoplasmic-facing. The helical transmembrane segment at Val84–Leu104 threads the bilayer. Residues Leu105–Ser109 lie on the Periplasmic side of the membrane. A helical membrane pass occupies residues Leu110 to Ala130. The Cytoplasmic portion of the chain corresponds to Leu131 to Arg156. The chain crosses the membrane as a helical span at residues Leu157 to Trp177. Position 178 (Asn178) is a topological domain, periplasmic. The helical transmembrane segment at Tyr179–Leu199 threads the bilayer. The Cytoplasmic segment spans residues Pro200–Arg218. The helical transmembrane segment at Phe219–Ala239 threads the bilayer. The Periplasmic portion of the chain corresponds to Ser240–Ser256. A helical transmembrane segment spans residues Ala257–Thr277. The Cytoplasmic portion of the chain corresponds to Ser278–Pro287. The chain crosses the membrane as a helical span at residues Gly288 to Leu307. The Periplasmic segment spans residues Met308 to Leu313. A helical membrane pass occupies residues Gly314–Leu336. At Gln337 to Asn356 the chain is on the cytoplasmic side. Residues Val357–Val377 form a helical membrane-spanning segment. Residue Ala378 is a topological domain, periplasmic. Residues Ser379–Val399 traverse the membrane as a helical segment. The Cytoplasmic portion of the chain corresponds to Glu400 to Ser416.

The protein belongs to the major facilitator superfamily. EntS (TC 2.A.1.38) family.

Its subcellular location is the cell inner membrane. Component of an export pathway for enterobactin. The protein is Enterobactin exporter EntS of Shigella dysenteriae serotype 1 (strain Sd197).